We begin with the raw amino-acid sequence, 482 residues long: Anthranilate synthase component 1 (482 aa).

Residues serine 47 and proline 267–methionine 269 each bind L-tryptophan. Residue glycine 302–threonine 303 participates in chorismate binding. Glutamate 329 is a binding site for Mg(2+). Residues tyrosine 417, arginine 437, glycine 451–glycine 453, and glycine 453 contribute to the chorismate site. Glutamate 466 contacts Mg(2+).

Belongs to the anthranilate synthase component I family. As to quaternary structure, heterotetramer consisting of two non-identical subunits: a beta subunit (TrpG) and a large alpha subunit (TrpE). Requires Mg(2+) as cofactor.

The catalysed reaction is chorismate + L-glutamine = anthranilate + pyruvate + L-glutamate + H(+). Its pathway is amino-acid biosynthesis; L-tryptophan biosynthesis; L-tryptophan from chorismate: step 1/5. With respect to regulation, feedback inhibited by tryptophan. Part of a heterotetrameric complex that catalyzes the two-step biosynthesis of anthranilate, an intermediate in the biosynthesis of L-tryptophan. In the first step, the glutamine-binding beta subunit (TrpG) of anthranilate synthase (AS) provides the glutamine amidotransferase activity which generates ammonia as a substrate that, along with chorismate, is used in the second step, catalyzed by the large alpha subunit of AS (TrpE) to produce anthranilate. In the absence of TrpG, TrpE can synthesize anthranilate directly from chorismate and high concentrations of ammonia. This Spirochaeta aurantia protein is Anthranilate synthase component 1 (trpE).